A 462-amino-acid polypeptide reads, in one-letter code: Cysteine--tRNA ligase (462 aa).

A Zn(2+)-binding site is contributed by Cys-27. Residues 29–39 carry the 'HIGH' region motif; sequence PTVYNYIHVGN. Positions 209, 234, and 238 each coordinate Zn(2+). Positions 266–270 match the 'KMSKS' region motif; the sequence is KMSKS. Lys-269 serves as a coordination point for ATP.

Belongs to the class-I aminoacyl-tRNA synthetase family. As to quaternary structure, monomer. The cofactor is Zn(2+).

The protein resides in the cytoplasm. The enzyme catalyses tRNA(Cys) + L-cysteine + ATP = L-cysteinyl-tRNA(Cys) + AMP + diphosphate. This is Cysteine--tRNA ligase from Finegoldia magna (strain ATCC 29328 / DSM 20472 / WAL 2508) (Peptostreptococcus magnus).